An 888-amino-acid chain; its full sequence is Bifunctional uridylyltransferase/uridylyl-removing enzyme (888 aa).

A uridylyltransferase region spans residues 1-338 (MIITSPLLDY…LPNYERKIEE (338 aa)). Residues 182-204 (EQAKRHAQHNNTESNLEPDIKNA) are disordered. The uridylyl-removing stretch occupies residues 339 to 699 (INENFKLVDG…AHRQSAQDAV (361 aa)). One can recognise an HD domain in the interval 457 to 579 (VDAHTLLLIR…LGDMEHLDYL (123 aa)). ACT domains follow at residues 700 to 781 (QIFI…GLMQ) and 809 to 887 (MVEI…IVSQ).

It belongs to the GlnD family. It depends on Mg(2+) as a cofactor.

It catalyses the reaction [protein-PII]-L-tyrosine + UTP = [protein-PII]-uridylyl-L-tyrosine + diphosphate. The catalysed reaction is [protein-PII]-uridylyl-L-tyrosine + H2O = [protein-PII]-L-tyrosine + UMP + H(+). Its activity is regulated as follows. Uridylyltransferase (UTase) activity is inhibited by glutamine, while glutamine activates uridylyl-removing (UR) activity. Modifies, by uridylylation and deuridylylation, the PII regulatory proteins (GlnB and homologs), in response to the nitrogen status of the cell that GlnD senses through the glutamine level. Under low glutamine levels, catalyzes the conversion of the PII proteins and UTP to PII-UMP and PPi, while under higher glutamine levels, GlnD hydrolyzes PII-UMP to PII and UMP (deuridylylation). Thus, controls uridylylation state and activity of the PII proteins, and plays an important role in the regulation of nitrogen assimilation and metabolism. This is Bifunctional uridylyltransferase/uridylyl-removing enzyme from Acinetobacter baylyi (strain ATCC 33305 / BD413 / ADP1).